Reading from the N-terminus, the 390-residue chain is MDLESFLLGAVYYYGLFIGLSNFEFDWNTGRVFTKKWSTLYAIALDSCIFALYIYHWTGNTNIVNAIFGRANMLHEYVVAILTGLRIVTGLFTLILRWYQRCKMMDLASKVVRMYVARPQVRRMSRWGILTKFIFGSITDGLQMAMVLSAMGSVDSQFYLGLGLQYWMFVILNMAMMQQHMIMLFVRTQFQLINTELRQVIDEAKDLLLSPRHQGVFMTKCCSLADQIENIARIQSQLQTIMNQMEEVFGIQGAMTYGGYYLSSVGTCYLAYSILKHGYENLSMTLSTVILAYSWCFFYYLDGMLNLSVMLHVQDDYWEMLQILGKRTIFVGLDVRLEEAFENLNLQLIRNPLKITVVKLYDVTRSNTMAMFGNLITHSIFLIQYDIEHF.

Over M1–E4 the chain is Cytoplasmic. Residues S5–F25 form a helical membrane-spanning segment. At D26 to K36 the chain is on the extracellular side. A helical transmembrane segment spans residues W37–W57. Topologically, residues T58–H75 are cytoplasmic. A helical transmembrane segment spans residues E76–L96. Residues R97 to K132 lie on the Extracellular side of the membrane. A helical transmembrane segment spans residues F133–S153. Residues V154–Q165 lie on the Cytoplasmic side of the membrane. A helical membrane pass occupies residues Y166 to V186. Residues R187–A254 lie on the Extracellular side of the membrane. The chain crosses the membrane as a helical span at residues M255–L275. Topologically, residues K276–T288 are cytoplasmic. Residues V289–V309 traverse the membrane as a helical segment. Over M310–F390 the chain is Extracellular.

The protein belongs to the insect chemoreceptor superfamily. Gustatory receptor (GR) family. Gr22e subfamily. Expressed in neurons of the terminal external chemosensory organ of larvae.

It localises to the cell membrane. Probable gustatory receptor which mediates acceptance or avoidance behavior, depending on its substrates. The protein is Putative gustatory receptor 36c (Gr36c) of Drosophila melanogaster (Fruit fly).